The following is a 56-amino-acid chain: Small ribosomal subunit protein uS14 (56 aa).

Zn(2+)-binding residues include C21, C24, C39, and C42.

The protein belongs to the universal ribosomal protein uS14 family. Zn(2+) serves as cofactor.

This is Small ribosomal subunit protein uS14 (RPS29) from Triticum aestivum (Wheat).